The chain runs to 232 residues: Endonuclease NucS (232 aa).

The protein belongs to the NucS endonuclease family.

The protein localises to the cytoplasm. Functionally, cleaves both 3' and 5' ssDNA extremities of branched DNA structures. This Mycobacteroides abscessus (strain ATCC 19977 / DSM 44196 / CCUG 20993 / CIP 104536 / JCM 13569 / NCTC 13031 / TMC 1543 / L948) (Mycobacterium abscessus) protein is Endonuclease NucS.